Here is a 133-residue protein sequence, read N- to C-terminus: Histone H2A.1 (133 aa).

A disordered region spans residues 1 to 23 (MSTTGKGGKAKGKTASSKQVSRS). Ser2 is modified (N-acetylserine). Residues Lys6, Lys9, Lys11, Lys13, and Lys18 each carry the N6-acetyllysine modification. Ser123 carries the phosphoserine modification. Residue Lys124 forms a Glycyl lysine isopeptide (Lys-Gly) (interchain with G-Cter in ubiquitin) linkage. Ser129 carries the post-translational modification Phosphoserine.

The protein belongs to the histone H2A family. As to quaternary structure, the nucleosome is a histone octamer containing two molecules each of H2A, H2B, H3 and H4 assembled in one H3-H4 heterotetramer and two H2A-H2B heterodimers. The octamer wraps approximately 147 bp of DNA. In terms of processing, monoubiquitination of Lys-124 gives a specific tag for epigenetic transcriptional repression. Acetylation occurs almost exclusively in the MAC.

Its subcellular location is the nucleus. The protein resides in the chromosome. Its function is as follows. Core component of nucleosome. Nucleosomes wrap and compact DNA into chromatin, limiting DNA accessibility to the cellular machineries which require DNA as a template. Histones thereby play a central role in transcription regulation, DNA repair, DNA replication and chromosomal stability. DNA accessibility is regulated via a complex set of post-translational modifications of histones, also called histone code, and nucleosome remodeling. The polypeptide is Histone H2A.1 (HTA2) (Tetrahymena pyriformis).